Here is a 357-residue protein sequence, read N- to C-terminus: U5 small nuclear ribonucleoprotein 40 kDa protein (357 aa).

Residue Lys18 forms a Glycyl lysine isopeptide (Lys-Gly) (interchain with G-Cter in SUMO2) linkage. Arg21 is subject to Asymmetric dimethylarginine. WD repeat units follow at residues 64 to 103 (GHEG…GNYA), 107 to 146 (GYSG…RVKR), 149 to 189 (GHTS…AIQT), 191 to 230 (QNTY…LTYT), 233 to 272 (GHAD…PKER), 283 to 322 (NFEK…ILYK), and 325 to 357 (GHAG…GEIQ). Lys270 is covalently cross-linked (Glycyl lysine isopeptide (Lys-Gly) (interchain with G-Cter in SUMO2)).

As to quaternary structure, component of the pre-catalytic and catalytic spliceosome complexes. Component of the postcatalytic spliceosome P complex. Part of the U5 snRNP complex. Interacts with PRPF8. Component of the U4/U6-U5 tri-snRNP complex composed of the U4, U6 and U5 snRNAs and at least PRPF3, PRPF4, PRPF6, PRPF8, PRPF31, SNRNP200, TXNL4A, WDR57, SNRNP40, DDX23, CD2BP2, PPIH, SNU13, EFTUD2, SART1 and USP39. Component of the minor spliceosome, which splices U12-type introns.

It localises to the nucleus. In terms of biological role, required for pre-mRNA splicing as component of the activated spliceosome. Component of the U5 small nuclear ribonucleoprotein (snRNP) complex and the U4/U6-U5 tri-snRNP complex, building blocks of the spliceosome. As a component of the minor spliceosome, involved in the splicing of U12-type introns in pre-mRNAs. This is U5 small nuclear ribonucleoprotein 40 kDa protein (SNRNP40) from Pongo abelii (Sumatran orangutan).